Reading from the N-terminus, the 209-residue chain is Large ribosomal subunit protein uL3 (209 aa).

The protein belongs to the universal ribosomal protein uL3 family. In terms of assembly, part of the 50S ribosomal subunit. Forms a cluster with proteins L14 and L19.

Its function is as follows. One of the primary rRNA binding proteins, it binds directly near the 3'-end of the 23S rRNA, where it nucleates assembly of the 50S subunit. The protein is Large ribosomal subunit protein uL3 of Desulfotalea psychrophila (strain LSv54 / DSM 12343).